A 393-amino-acid polypeptide reads, in one-letter code: Protein TsgA (393 aa).

A run of 12 helical transmembrane segments spans residues 11-31 (WISF…GMVM), 51-71 (FLNA…EIVP), 78-98 (FGFL…SLAL), 101-121 (AAMF…TFLV), 134-154 (LLFT…IAAF), 162-182 (WYWV…LTFG), 206-226 (IGVL…LGFI), 245-265 (TLVS…SFIL), 273-293 (ILTV…TGTP), 297-317 (AWSI…IITL), 332-352 (FVLT…GPIV), and 361-381 (LLTA…LGFV).

It belongs to the major facilitator superfamily. TsgA family.

The protein resides in the cell inner membrane. In Escherichia coli O139:H28 (strain E24377A / ETEC), this protein is Protein TsgA.